A 336-amino-acid chain; its full sequence is Flavonol synthase/flavanone 3-hydroxylase (336 aa).

Residues 99-118 are disordered; sequence EKESVAKPEDSKDIEGYGTK. The region spanning 196–296 is the Fe2OG dioxygenase domain; the sequence is MAEYMMKINY…RMSWPVFLEP (101 aa). 204-206 lines the 2-oxoglutarate pocket; it reads NYY. The Fe cation site is built by H221, D223, and H277. Residue 287 to 289 participates in 2-oxoglutarate binding; it reads RMS.

The protein belongs to the iron/ascorbate-dependent oxidoreductase family. Requires L-ascorbate as cofactor. Fe(2+) serves as cofactor. As to expression, expressed in young seedlings (at protein level). Expressed in roots, emerging leaves, shoot-root transition zone, trichomes, flowers and siliques. In cotyledons, expressed mostly on the adaxial side and only in guard cells on the abaxial side.

Its subcellular location is the cytoplasm. It is found in the nucleus. It catalyses the reaction a (2R,3R)-dihydroflavonol + 2-oxoglutarate + O2 = a flavonol + succinate + CO2 + H2O. The catalysed reaction is a (2S)-flavan-4-one + 2-oxoglutarate + O2 = a (2R,3R)-dihydroflavonol + succinate + CO2. Its pathway is secondary metabolite biosynthesis; flavonoid biosynthesis. Functionally, catalyzes the formation of flavonols from dihydroflavonols. It can act on dihydrokaempferol to produce kaempferol, on dihydroquercetin to produce quercitin and on dihydromyricetin to produce myricetin. In vitro catalyzes the oxidation of both enantiomers of naringenin to give both cis- and trans-dihydrokaempferol. This Arabidopsis thaliana (Mouse-ear cress) protein is Flavonol synthase/flavanone 3-hydroxylase (FLS1).